Here is a 377-residue protein sequence, read N- to C-terminus: E3 ubiquitin-protein ligase rififylin (377 aa).

The segment at 55 to 107 (TGSEPSCKACGVHFASTTRKQTCLDCKKNFCMTCSSQEGNGPRLCLLCLRFRA) adopts an FYVE-type zinc-finger fold. Residues 115-134 (LMKMKVKDLRDYLSLHDIST) enclose the SAP 1 domain. The tract at residues 176–249 (LTQPQTSTVP…SVDSEDSFVP (74 aa)) is disordered. Residues 190–212 (GLPSSPAQVTSVPLAQDQETQQA) are compositionally biased toward polar residues. The segment covering 235–245 (EDETQSVDSED) has biased composition (acidic residues). 4 positions are modified to phosphoserine: S240, S243, S246, and S254. The SAP 2 domain maps to 264 to 278 (IEGLTVRQLKEILAR). Residues 330–365 (CKICMDSPIDCVLLECGHMVTCTKCGKRMNECPICR) form an RING-type zinc finger.

In terms of assembly, interacts with CASP8 and CASP10. Interacts with RIPK1 (via protein kinase domain); involved in RIPK1 ubiquitination. Interacts with PRR5L. Interacts (via RING-type zinc finger) with p53/TP53; involved in p53/TP53 ubiquitination. Interacts (via RING-type zinc finger) with MDM2; the interaction stabilizes MDM2. Post-translationally, autoubiquitinated. In terms of processing, palmitoylated. Undergoes caspase-mediated cleavage upon death-receptor activation, by TNFSF10 for instance. May be mediated by the caspases CASP8 and CASP10 in a negative feedback loop. As to expression, ubiquitous. Detected in heart, brain, spleen, lung, liver, skeletal muscle, kidney, testis, thymus, whole embryo and embryonic stem cells.

The protein localises to the cytoplasm. The protein resides in the cytosol. It localises to the cell membrane. Its subcellular location is the recycling endosome membrane. It carries out the reaction S-ubiquitinyl-[E2 ubiquitin-conjugating enzyme]-L-cysteine + [acceptor protein]-L-lysine = [E2 ubiquitin-conjugating enzyme]-L-cysteine + N(6)-ubiquitinyl-[acceptor protein]-L-lysine.. It participates in protein modification; protein ubiquitination. E3 ubiquitin-protein ligase that regulates several biological processes through the ubiquitin-mediated proteasomal degradation of various target proteins. Mediates 'Lys-48'-linked polyubiquitination of PRR5L and its subsequent proteasomal degradation thereby indirectly regulating cell migration through the mTORC2 complex. Also ubiquitinates the caspases CASP8 and CASP10, promoting their proteasomal degradation, to negatively regulate apoptosis downstream of death domain receptors. Also negatively regulates the tumor necrosis factor-mediated signaling pathway through targeting of RIPK1 to ubiquitin-mediated proteasomal degradation. Negatively regulates p53/TP53 through its direct ubiquitination and targeting to proteasomal degradation. Indirectly, may also negatively regulate p53/TP53 through ubiquitination and degradation of SFN. May also play a role in endocytic recycling. In Mus musculus (Mouse), this protein is E3 ubiquitin-protein ligase rififylin.